The sequence spans 679 residues: Glycine--tRNA ligase beta subunit (679 aa).

Belongs to the class-II aminoacyl-tRNA synthetase family. Tetramer of two alpha and two beta subunits.

It is found in the cytoplasm. The enzyme catalyses tRNA(Gly) + glycine + ATP = glycyl-tRNA(Gly) + AMP + diphosphate. This chain is Glycine--tRNA ligase beta subunit, found in Thermodesulfovibrio yellowstonii (strain ATCC 51303 / DSM 11347 / YP87).